Reading from the N-terminus, the 492-residue chain is Polyamine oxidase 5 (492 aa).

FAD contacts are provided by glutamate 55, arginine 63, valine 244, and glutamate 431. The Microbody targeting signal motif lies at 490 to 492; sequence SRL.

It belongs to the flavin monoamine oxidase family. It depends on FAD as a cofactor. Widely expressed.

The protein localises to the peroxisome. The catalysed reaction is spermine + O2 + H2O = 3-aminopropanal + spermidine + H2O2. The enzyme catalyses norspermine + O2 + H2O = norspermidine + 3-aminopropanal + H2O2. It carries out the reaction thermospermine + O2 + H2O = 3-aminopropanal + spermidine + H2O2. Its pathway is amine and polyamine degradation; spermine degradation. Flavoenzyme involved in polyamine back-conversion. Catalyzes the oxidation of the secondary amino group of polyamines, such as spermine. Substrate preference is spermine &gt; thermospermine &gt; norspermine. No activity detected when putrescine, spermidine or N(1)-acetylspermidine are used as substrates. Plays an important role in the regulation of polyamine intracellular concentration. May play a role in producing hydrogen peroxide during seed germination. The protein is Polyamine oxidase 5 of Oryza sativa subsp. japonica (Rice).